The chain runs to 141 residues: MPKKTIKIVVEGGNVKPGPPLGPTLSQLKLNVGEVVKKINEATAQFKGMTVPVTIDVDLDTKEFEISVGIPTTSSLLLKKAGAEAPSGDPAHKKIANVSLEDIIDVAITKKPSLTAKTLKAAVKSILGTARQIGLTVDKKD.

This sequence belongs to the universal ribosomal protein uL11 family. Part of the ribosomal stalk of the 50S ribosomal subunit. Interacts with L10 and the large rRNA to form the base of the stalk. L10 forms an elongated spine to which L12 dimers bind in a sequential fashion forming a multimeric L10(L12)X complex.

Forms part of the ribosomal stalk which helps the ribosome interact with GTP-bound translation factors. The sequence is that of Large ribosomal subunit protein uL11 from Acidianus ambivalens (Desulfurolobus ambivalens).